Reading from the N-terminus, the 1133-residue chain is Protein cordon-bleu (1133 aa).

Positions 1 to 11 (MKARAPPPPGK) are enriched in pro residues. Residues 1 to 25 (MKARAPPPPGKPAAQNVHSEQKLPH) form a disordered region. A phosphoserine mark is found at S31, S34, S196, S219, S256, and S278. Disordered stretches follow at residues 246–393 (AEHL…SVNG) and 442–568 (QGGI…GQAS). The segment covering 272–301 (CVTTPNSPSLHSRSLTLGPSLSLGNISGMS) has biased composition (polar residues). The KKRRAP 1 signature appears at 307–312 (KKRRAP). Phosphoserine is present on residues S330 and S333. A KKRRAP 2 motif is present at residues 340-345 (KKRRAP). Pro residues predominate over residues 345–358 (PAPPPPQPPPPSPV). Position 356 is a phosphoserine (S356). Over residues 361–371 (NRKEDKEENRK) the composition is skewed to basic and acidic residues. 2 stretches are compositionally biased toward polar residues: residues 382 to 393 (TDTSSLTSSVNG) and 442 to 464 (QGGIASQRSHLPPYQTEQSQPFI). S447 is subject to Phosphoserine. The span at 512 to 524 (STDDPKAKDKDKM) shows a compositional bias: basic and acidic residues. Phosphoserine is present on S614. A disordered region spans residues 664–720 (APSTTITATSEKPQRDETKAGFTLTTPEQQPASQEYGAPPEEDRSRPHSAVSCPVKV). Composition is skewed to polar residues over residues 665–674 (PSTTITATSE) and 686–696 (TLTTPEQQPAS). The residue at position 924 (S924) is a Phosphoserine. Disordered regions lie at residues 942-961 (PSPLSADGQNSDDALPSSIF) and 990-1018 (HTSGGRDKLRKTAEQASEGRPKKPSYVEA). WH2 domains follow at residues 981-1001 (LHSALMEAIHTSGGRDKLRKT) and 1021-1041 (ERSALLAAIRGHSGTLSLRKV). Residues 993–1010 (GGRDKLRKTAEQASEGRP) are compositionally biased toward basic and acidic residues. Residues 1063–1091 (DKPQQEDRGLPPPPALPPPSTPASQVPSA) form a disordered region. The segment covering 1072-1083 (LPPPPALPPPST) has biased composition (pro residues). S1099 bears the Phosphoserine mark. Residues 1109–1129 (ARQALMDAIRSGTGAARLRKV) enclose the WH2 3 domain.

As to quaternary structure, identified in a complex composed of ACTA1, COBL, GSN AND TMSB4X. Identified in a complex composed of COBL, PACSIN1 and WASL. Interacts with PACSIN1, PACSIN2 and PACSIN3. Interacts (via WH2 domains) with actin monomers. Interacts with both PACSIN1 and DBNL. Detected in brain (at protein level).

The protein localises to the cell membrane. It localises to the cytoplasm. It is found in the cytoskeleton. Its subcellular location is the cell projection. The protein resides in the ruffle. The protein localises to the cytosol. In terms of biological role, plays an important role in the reorganization of the actin cytoskeleton. Binds to and sequesters actin monomers (G actin). Nucleates actin polymerization by assembling three actin monomers in cross-filament orientation and thereby promotes growth of actin filaments at the barbed end. Can also mediate actin depolymerization at barbed ends and severing of actin filaments. Promotes formation of cell ruffles. Regulates dendrite branching in Purkinje cells. Regulates neuron morphogenesis and increases branching of axons and dendrites. This is Protein cordon-bleu (Cobl) from Rattus norvegicus (Rat).